The following is a 725-amino-acid chain: Beta-adducin (725 aa).

Residues 1-22 (MSEDTVPEAASPPPSQGQHYFD) are disordered. A phosphoserine mark is found at serine 11 and serine 25. Threonine 55 is subject to Phosphothreonine. Phosphoserine occurs at positions 60 and 344. The segment at 425–444 (KQQKEKTRWLNTPNTYLRVN) is interaction with calmodulin. The tract at residues 525–725 (AEKSRSPSTE…KSKKKEKVES (201 aa)) is disordered. Serine 530 and serine 532 each carry phosphoserine. Threonine 533 carries the post-translational modification Phosphothreonine. Phosphoserine is present on serine 535. Threonine 561 carries the post-translational modification Phosphothreonine. Over residues 566–589 (EEYKKEVERKKLEQEQEGEKDIAT) the composition is skewed to basic and acidic residues. 4 positions are modified to phosphoserine: serine 594, serine 598, serine 602, and serine 606. Positions 596–621 (VKSTPASPVQSPSKAGTKSPAVSPSK) are enriched in polar residues. The residue at position 612 (threonine 612) is a Phosphothreonine. Phosphoserine occurs at positions 614, 618, and 620. Residues 622 to 631 (TSEDTKKTEV) are compositionally biased toward basic and acidic residues. Residue threonine 674 is modified to Phosphothreonine. 9 positions are modified to phosphoserine: serine 678, serine 685, serine 688, serine 692, serine 696, serine 698, serine 700, serine 702, and serine 712. Low complexity predominate over residues 687–700 (TSGPLSPEGSPSKS). The span at 701-725 (PSKKKKKFRTPSFLKKSKKKEKVES) shows a compositional bias: basic residues. Residues 703–720 (KKKKKFRTPSFLKKSKKK) form an interaction with calmodulin region.

It belongs to the aldolase class II family. Adducin subfamily. Found in a complex with ADD2, DMTN and SLC2A1. Interacts with SLC2A1. Heterodimer of an alpha and a beta subunit.

The protein resides in the cytoplasm. The protein localises to the cytoskeleton. It is found in the cell membrane. Functionally, membrane-cytoskeleton-associated protein that promotes the assembly of the spectrin-actin network. Binds to the erythrocyte membrane receptor SLC2A1/GLUT1 and may therefore provide a link between the spectrin cytoskeleton to the plasma membrane. Binds to calmodulin. Calmodulin binds preferentially to the beta subunit. The polypeptide is Beta-adducin (Add2) (Mus musculus (Mouse)).